Here is a 317-residue protein sequence, read N- to C-terminus: Protein CbxX, chromosomal (317 aa).

Residues 1 to 21 form a disordered region; that stretch reads MSAPETTAPLQPPAAPAASLP. An ATP-binding site is contributed by 85–92; that stretch reads GNPGTGKT.

Belongs to the CbxX/CfxQ family.

Seems to be necessary for the expression of RuBisCO. The chain is Protein CbxX, chromosomal (cbxXC) from Cupriavidus necator (strain ATCC 17699 / DSM 428 / KCTC 22496 / NCIMB 10442 / H16 / Stanier 337) (Ralstonia eutropha).